A 623-amino-acid chain; its full sequence is Glutathione import ATP-binding protein GsiA (623 aa).

2 consecutive ABC transporter domains span residues 15 to 269 and 314 to 564; these read VENL…RALL and LRVR…RKLL. ATP-binding positions include 49 to 56 and 357 to 364; these read GESGSGKS.

It belongs to the ABC transporter superfamily. Glutathione importer (TC 3.A.1.5.11) family. As to quaternary structure, the complex is composed of two ATP-binding proteins (GsiA), two transmembrane proteins (GsiC and GsiD) and a solute-binding protein (GsiB).

The protein localises to the cell inner membrane. The enzyme catalyses glutathione(out) + ATP + H2O = glutathione(in) + ADP + phosphate + H(+). Its function is as follows. Part of the ABC transporter complex GsiABCD involved in glutathione import. Responsible for energy coupling to the transport system. This Shigella dysenteriae serotype 1 (strain Sd197) protein is Glutathione import ATP-binding protein GsiA.